The sequence spans 85 residues: UPF0291 protein SEQ_0545 (85 aa).

A disordered region spans residues Thr-62–Ser-85.

Belongs to the UPF0291 family.

The protein resides in the cytoplasm. In Streptococcus equi subsp. equi (strain 4047), this protein is UPF0291 protein SEQ_0545.